The sequence spans 53 residues: uncharacterized protein (53 aa).

A helical transmembrane segment spans residues 20–42 (ILFPVLLVFDTILIVVGIALILF).

The protein localises to the membrane. This is an uncharacterized protein from Archaeoglobus fulgidus (strain ATCC 49558 / DSM 4304 / JCM 9628 / NBRC 100126 / VC-16).